A 316-amino-acid chain; its full sequence is Ribosomal RNA small subunit methyltransferase H (316 aa).

Residues 35–37 (SGH), Asp55, Phe84, Asp105, and Gln112 contribute to the S-adenosyl-L-methionine site.

The protein belongs to the methyltransferase superfamily. RsmH family.

It is found in the cytoplasm. The catalysed reaction is cytidine(1402) in 16S rRNA + S-adenosyl-L-methionine = N(4)-methylcytidine(1402) in 16S rRNA + S-adenosyl-L-homocysteine + H(+). Specifically methylates the N4 position of cytidine in position 1402 (C1402) of 16S rRNA. This Streptococcus pyogenes serotype M4 (strain MGAS10750) protein is Ribosomal RNA small subunit methyltransferase H.